A 433-amino-acid chain; its full sequence is MAKIINIIGREIMDSRGNPTVEAEVHLEGGFMGMAAAPSGASTGSREALELRDGDKARYLGKGVLKAVEAVNGTIADALIGKDATAQAELDQIMIDLDGTENKAKFGANAILAVSLAAAKAAAAFKGVPLYAHIADLNGTPGVYSMPLPMMNIINGGEHADNSVDIQEFMIQPVGAANFREGLRMGAEVFHSLAKVLKADGHSTAVGDEGGFAPNLPSNASALAAIKVAVANAGYELGKDITLAMDCAASEFYDKEANIYDLKGEGKKFTSEEFNFFLQDLTKEYPIVSIEDGLDESDWDGFAHQTKLMGDKIQLVGDDLFVTNTKILKRGIDNGIANSILIKFNQIGSLTETLAAIKMAKDAGFTVVISHRSGETEDATIADLAVGTAAGQIKTGSLSRSDRVAKYNQLLRIEEQLGEKAPYKGLKEVKGQA.

A (2R)-2-phosphoglycerate-binding site is contributed by Q167. E209 acts as the Proton donor in catalysis. Mg(2+)-binding residues include D246, E291, and D318. (2R)-2-phosphoglycerate-binding residues include K343, R372, S373, and K394. Catalysis depends on K343, which acts as the Proton acceptor.

Belongs to the enolase family. In terms of assembly, component of the RNA degradosome, a multiprotein complex involved in RNA processing and mRNA degradation. Requires Mg(2+) as cofactor.

Its subcellular location is the cytoplasm. It is found in the secreted. The protein localises to the cell surface. The enzyme catalyses (2R)-2-phosphoglycerate = phosphoenolpyruvate + H2O. The protein operates within carbohydrate degradation; glycolysis; pyruvate from D-glyceraldehyde 3-phosphate: step 4/5. Its function is as follows. Catalyzes the reversible conversion of 2-phosphoglycerate (2-PG) into phosphoenolpyruvate (PEP). It is essential for the degradation of carbohydrates via glycolysis. This chain is Enolase, found in Shewanella piezotolerans (strain WP3 / JCM 13877).